A 456-amino-acid chain; its full sequence is MARLLFSGQRLRPSFLRSYIRANPSSTPSATRAAINYRYNSNNAALQSASSSQGALTGIKIIDLSRVLAGPFCTQILADYGAEVTKVEAVGKGDDTRHWIMAGEKASWNESSGPISNYFAAVNRNKRSITVNFKKAEGRQLILDLIKDADVVVENFKPGTMERLGLGYDVLKELNPRIIYAGLSGYGRTGPYRTRGGYDPIAAAEAGLLHVTGEKNGPPVRAGIGLVDMSTGLFLHGAILSALIARARDGTGQRVDASLFETQLSLLTNVGLAWLNLGIEAERWGCQHPSIAPYDAFKTRDRYLVCGATNDNQYAALCCLLGVEHLVTDPRFITNPLRVQHREELAALLGPIFASKTIDEWIALFEPSGLPFGPINNMEATFAHPQTAARDMVIDVPMDAACAGSIKVIGPAVKFGDSKTGLRTGPPRLGQHTVEILEEIGMDAEAIAKYKEDGII.

A mitochondrion-targeting transit peptide spans 1-33 (MARLLFSGQRLRPSFLRSYIRANPSSTPSATRA).

Belongs to the CoA-transferase III family.

It is found in the mitochondrion. Its function is as follows. Acyl-CoA transferase; part of the Fusarium detoxification of benzoxazolinone cluster involved in the degradation of benzoxazolinones produced by the host plant. Maize, wheat, and rye produce the 2 benzoxazinone phytoanticipins 2,4-dihy-droxy-7-methoxy-1,4-benzoxazin-3-one (DIMBOA) and 2,4-dihydroxy-1,4-benzoxazin-3-one (DIBOA) that, due to their inherent instability once released, spontaneously degrade to the more stable corresponding benzoxazolinones, 6-methoxy-2-benzoxazolinone (MBOA) and 2-benzoxazolinone (BOA), respectively. The first step in the detoxification of benzoxazolinones involves the hydrolysis of the cyclic ester bond of benzoxazolinones by the gamma-lactamase FDB1 to aminophenols. FDB1 is able to convert 2-benzoxazolinone (BOA) into 2-aminophenol (2-AP), as well as 6-methoxy-2-benzoxazolinone (MBOA) into 5-methoxy-2-aminophenol (2-AMP). The N-malonyltransferase FDB2 then metabolizes aminophenols via N-malonylation to non-toxic malonamic acids. FDB2 converts 2-AP into N-(2-hydroxyphenyl) malonamic acid (HPMA) and 2-AMP into N-(2-hydroxy-4-methoxyphenyl) malonamic acid (HMPMA). The cluster also contains 2 transcription factors (FDB3 and FPSE_08121), an aldo-keto reductase (FPSE_08125) that possibly associates with a ketone component of BOA and MBOA degradation, an esterase (FPSE_08126), an acyl-CoA transferase (FPSE_08120), a solute carrier protein (FPSE_08119) and a transmembrane transporter (FPSE_08127) proposed to shuttle metabolites of benzoxazolinone degradation. The polypeptide is Acyl-CoA transferase FPSE_08120 (Fusarium pseudograminearum (strain CS3096) (Wheat and barley crown-rot fungus)).